The chain runs to 142 residues: Acidic phospholipase A2 Bc-PL (142 aa).

An N-terminal signal peptide occupies residues 1–9; it reads AVCVSLLGA. A propeptide spanning residues 10 to 17 is cleaved from the precursor; the sequence is ANIPPQPL. Intrachain disulfides connect C28–C94, C44–C141, C46–C62, C61–C122, C68–C115, C78–C108, and C101–C113. Ca(2+) contacts are provided by Y45, G47, and G49. H65 is a catalytic residue. Ca(2+) is bound at residue D66. The active site involves D116.

The protein belongs to the phospholipase A2 family. Group I subfamily. D49 sub-subfamily. It depends on Ca(2+) as a cofactor. Expressed by the venom gland.

The protein localises to the secreted. It carries out the reaction a 1,2-diacyl-sn-glycero-3-phosphocholine + H2O = a 1-acyl-sn-glycero-3-phosphocholine + a fatty acid + H(+). Functionally, PLA2 catalyzes the calcium-dependent hydrolysis of the 2-acyl groups in 3-sn-phosphoglycerides. The chain is Acidic phospholipase A2 Bc-PL from Bungarus candidus (Malayan krait).